Reading from the N-terminus, the 90-residue chain is Putative membrane protein insertion efficiency factor (90 aa).

The protein belongs to the UPF0161 family.

It localises to the cell inner membrane. Functionally, could be involved in insertion of integral membrane proteins into the membrane. This chain is Putative membrane protein insertion efficiency factor, found in Bordetella bronchiseptica (strain ATCC BAA-588 / NCTC 13252 / RB50) (Alcaligenes bronchisepticus).